A 133-amino-acid chain; its full sequence is Small ribosomal subunit protein uS8 (133 aa).

The protein belongs to the universal ribosomal protein uS8 family. In terms of assembly, part of the 30S ribosomal subunit. Contacts proteins S5 and S12.

One of the primary rRNA binding proteins, it binds directly to 16S rRNA central domain where it helps coordinate assembly of the platform of the 30S subunit. This is Small ribosomal subunit protein uS8 from Gloeothece citriformis (strain PCC 7424) (Cyanothece sp. (strain PCC 7424)).